A 333-amino-acid chain; its full sequence is Foldase protein PrsA (333 aa).

A signal peptide spans 1-22; that stretch reads MKKSTKLLAGIVTLASAMTLAA. Cysteine 23 is lipidated: N-palmitoyl cysteine. A lipid anchor (S-diacylglycerol cysteine) is attached at cysteine 23. One can recognise a PpiC domain in the interval 145 to 240; sequence TPEMTTQVIT…NKFYIVKVTK (96 aa). The tract at residues 301 to 333 is disordered; that stretch reads DKKASKANTSKSDQKTSSDSSKDSQSSKSKSEK. The segment covering 312 to 322 has biased composition (basic and acidic residues); the sequence is SDQKTSSDSSK. Residues 323–333 show a composition bias toward low complexity; the sequence is DSQSSKSKSEK.

Belongs to the PrsA family.

It is found in the cell membrane. The enzyme catalyses [protein]-peptidylproline (omega=180) = [protein]-peptidylproline (omega=0). Functionally, plays a major role in protein secretion by helping the post-translocational extracellular folding of several secreted proteins. This chain is Foldase protein PrsA, found in Streptococcus equi subsp. zooepidemicus (strain MGCS10565).